The following is a 299-amino-acid chain: Meso-diaminopimelate D-dehydrogenase (299 aa).

Residues 11–14, Arg36, 67–70, 90–92, and 119–123 each bind NADP(+); these read YGNI, CTPT, SFD, and AGWDP. Substrate contacts are provided by residues Asp92, Asp122, Phe146, 152 to 153, Thr171, Arg181, His227, and Asn253; that span reads MG.

It belongs to the diaminopimelate dehydrogenase family. In terms of assembly, homodimer.

It carries out the reaction meso-2,6-diaminopimelate + NADP(+) + H2O = (S)-2-amino-6-oxoheptanedioate + NH4(+) + NADPH + H(+). The protein operates within amino-acid biosynthesis; L-lysine biosynthesis via DAP pathway; DL-2,6-diaminopimelate from (S)-tetrahydrodipicolinate: step 1/1. In terms of biological role, catalyzes the reversible NADPH-dependent reductive amination of L-2-amino-6-oxopimelate, the acyclic form of L-tetrahydrodipicolinate, to generate the meso compound, D,L-2,6-diaminopimelate. Probably plays a role in lysine biosynthesis. Exhibits a high substrate specificity for meso-2,6-diaminopimelate (m-DAP), since the activity with L,L-2,6-diaminopimelate is less than 5% of the activity observed with m-DAP. Can use NAD(+) only very poorly since the activity observed in the presence of NAD(+) is about 14% of that with NADP(+). In Bacteroides fragilis (strain ATCC 25285 / DSM 2151 / CCUG 4856 / JCM 11019 / LMG 10263 / NCTC 9343 / Onslow / VPI 2553 / EN-2), this protein is Meso-diaminopimelate D-dehydrogenase (ddh).